The following is a 317-amino-acid chain: 4-hydroxy-3-methylbut-2-enyl diphosphate reductase (317 aa).

Residue cysteine 12 participates in [4Fe-4S] cluster binding. Residues histidine 41 and histidine 74 each contribute to the (2E)-4-hydroxy-3-methylbut-2-enyl diphosphate site. Dimethylallyl diphosphate-binding residues include histidine 41 and histidine 74. The isopentenyl diphosphate site is built by histidine 41 and histidine 74. Cysteine 97 provides a ligand contact to [4Fe-4S] cluster. Histidine 125 serves as a coordination point for (2E)-4-hydroxy-3-methylbut-2-enyl diphosphate. Residue histidine 125 coordinates dimethylallyl diphosphate. Histidine 125 lines the isopentenyl diphosphate pocket. Catalysis depends on glutamate 127, which acts as the Proton donor. Threonine 168 serves as a coordination point for (2E)-4-hydroxy-3-methylbut-2-enyl diphosphate. A [4Fe-4S] cluster-binding site is contributed by cysteine 198. (2E)-4-hydroxy-3-methylbut-2-enyl diphosphate contacts are provided by serine 226, serine 227, asparagine 228, and serine 270. Dimethylallyl diphosphate-binding residues include serine 226, serine 227, asparagine 228, and serine 270. The isopentenyl diphosphate site is built by serine 226, serine 227, asparagine 228, and serine 270.

It belongs to the IspH family. Homodimer. Requires [4Fe-4S] cluster as cofactor.

The enzyme catalyses isopentenyl diphosphate + 2 oxidized [2Fe-2S]-[ferredoxin] + H2O = (2E)-4-hydroxy-3-methylbut-2-enyl diphosphate + 2 reduced [2Fe-2S]-[ferredoxin] + 2 H(+). It catalyses the reaction dimethylallyl diphosphate + 2 oxidized [2Fe-2S]-[ferredoxin] + H2O = (2E)-4-hydroxy-3-methylbut-2-enyl diphosphate + 2 reduced [2Fe-2S]-[ferredoxin] + 2 H(+). It functions in the pathway isoprenoid biosynthesis; dimethylallyl diphosphate biosynthesis; dimethylallyl diphosphate from (2E)-4-hydroxy-3-methylbutenyl diphosphate: step 1/1. Its pathway is isoprenoid biosynthesis; isopentenyl diphosphate biosynthesis via DXP pathway; isopentenyl diphosphate from 1-deoxy-D-xylulose 5-phosphate: step 6/6. Functionally, catalyzes the conversion of 1-hydroxy-2-methyl-2-(E)-butenyl 4-diphosphate (HMBPP) into a mixture of isopentenyl diphosphate (IPP) and dimethylallyl diphosphate (DMAPP). Acts in the terminal step of the DOXP/MEP pathway for isoprenoid precursor biosynthesis. The polypeptide is 4-hydroxy-3-methylbut-2-enyl diphosphate reductase (Yersinia pseudotuberculosis serotype IB (strain PB1/+)).